Reading from the N-terminus, the 291-residue chain is Protein/nucleic acid deglycase HchA (291 aa).

Over residues methionine 1–histidine 18 the composition is skewed to basic and acidic residues. The tract at residues methionine 1–serine 24 is disordered. The active-site Nucleophile is cysteine 188.

Belongs to the peptidase C56 family. HchA subfamily.

Its subcellular location is the cytoplasm. It carries out the reaction N(omega)-(1-hydroxy-2-oxopropyl)-L-arginyl-[protein] + H2O = lactate + L-arginyl-[protein] + H(+). It catalyses the reaction N(6)-(1-hydroxy-2-oxopropyl)-L-lysyl-[protein] + H2O = lactate + L-lysyl-[protein] + H(+). The enzyme catalyses S-(1-hydroxy-2-oxopropyl)-L-cysteinyl-[protein] + H2O = lactate + L-cysteinyl-[protein] + H(+). The catalysed reaction is N(omega)-(1-hydroxy-2-oxoethyl)-L-arginyl-[protein] + H2O = L-arginyl-[protein] + glycolate + H(+). It carries out the reaction N(6)-(1-hydroxy-2-oxoethyl)-L-lysyl-[protein] + H2O = glycolate + L-lysyl-[protein] + H(+). It catalyses the reaction S-(1-hydroxy-2-oxoethyl)-L-cysteinyl-[protein] + H2O = glycolate + L-cysteinyl-[protein] + H(+). The enzyme catalyses N(2)-(1-hydroxy-2-oxopropyl)-dGTP + H2O = lactate + dGTP + H(+). The catalysed reaction is N(2)-(1-hydroxy-2-oxopropyl)-GTP + H2O = lactate + GTP + H(+). It carries out the reaction N(2)-(1-hydroxy-2-oxopropyl)-GDP + H2O = lactate + GDP + H(+). It catalyses the reaction N(2)-(1-hydroxy-2-oxopropyl)-GMP + H2O = lactate + GMP + H(+). The enzyme catalyses N(2)-(1-hydroxy-2-oxoethyl)-dGTP + H2O = dGTP + glycolate + H(+). The catalysed reaction is N(2)-(1-hydroxy-2-oxoethyl)-GTP + H2O = glycolate + GTP + H(+). It carries out the reaction N(2)-(1-hydroxy-2-oxoethyl)-GDP + H2O = glycolate + GDP + H(+). It catalyses the reaction N(2)-(1-hydroxy-2-oxoethyl)-GMP + H2O = glycolate + GMP + H(+). The enzyme catalyses an N(2)-(1-hydroxy-2-oxopropyl)-guanosine in RNA + H2O = a guanosine in RNA + lactate + H(+). The catalysed reaction is an N(2)-(1-hydroxy-2-oxopropyl)-2'-deoxyguanosine in DNA + H2O = a 2'-deoxyguanosine in DNA + lactate + H(+). It carries out the reaction an N(2)-(1-hydroxy-2-oxoethyl)-guanosine in RNA + H2O = a guanosine in RNA + glycolate + H(+). It catalyses the reaction an N(2)-(1-hydroxy-2-oxoethyl)-2'-deoxyguanosine in DNA + H2O = a 2'-deoxyguanosine in DNA + glycolate + H(+). In terms of biological role, protein and nucleotide deglycase that catalyzes the deglycation of the Maillard adducts formed between amino groups of proteins or nucleotides and reactive carbonyl groups of glyoxals. Thus, functions as a protein deglycase that repairs methylglyoxal- and glyoxal-glycated proteins, and releases repaired proteins and lactate or glycolate, respectively. Deglycates cysteine, arginine and lysine residues in proteins, and thus reactivates these proteins by reversing glycation by glyoxals. Acts on early glycation intermediates (hemithioacetals and aminocarbinols), preventing the formation of Schiff bases and advanced glycation endproducts (AGE). Also functions as a nucleotide deglycase able to repair glycated guanine in the free nucleotide pool (GTP, GDP, GMP, dGTP) and in DNA and RNA. Is thus involved in a major nucleotide repair system named guanine glycation repair (GG repair), dedicated to reversing methylglyoxal and glyoxal damage via nucleotide sanitization and direct nucleic acid repair. Plays an important role in protecting cells from carbonyl stress. The polypeptide is Protein/nucleic acid deglycase HchA (Pseudomonas aeruginosa (strain UCBPP-PA14)).